The sequence spans 198 residues: Recombination protein RecR (198 aa).

The segment at 57-72 (CSVCGHITDKDPCYIC) adopts a C4-type zinc-finger fold. The Toprim domain maps to 80 to 175 (SVICVVQESK…KVTRIAHGLP (96 aa)).

This sequence belongs to the RecR family.

Functionally, may play a role in DNA repair. It seems to be involved in an RecBC-independent recombinational process of DNA repair. It may act with RecF and RecO. This chain is Recombination protein RecR, found in Listeria welshimeri serovar 6b (strain ATCC 35897 / DSM 20650 / CCUG 15529 / CIP 8149 / NCTC 11857 / SLCC 5334 / V8).